The chain runs to 227 residues: MELVFIRHGQSEWNAKNLFTGWRDVKLSEQGLAEAAAAGKKLKENGYEFDIAFTSVLTRAIKTCNIVLEESDQLFVPQIKTWRLNERHYGQLQGLDKKQTAEQYGDEQVRIWRRSYDTLPPLLDKDDEFSAHKDRRYAHLPADVVPDGENLKVTLERVLPFWEDQIAPAILSGKRVLVAAHGNSLRALAKHIEGISDEDIMGLEIPTGQPLVYKLDDNLKVIEKFYL.

Substrate-binding positions include 7–14 (RHGQSEWN), 20–21 (TG), Arg59, 86–89 (ERHY), Lys97, 113–114 (RR), and 182–183 (GN). His8 acts as the Tele-phosphohistidine intermediate in catalysis. Glu86 (proton donor/acceptor) is an active-site residue.

The protein belongs to the phosphoglycerate mutase family. BPG-dependent PGAM subfamily. As to quaternary structure, homodimer.

It catalyses the reaction (2R)-2-phosphoglycerate = (2R)-3-phosphoglycerate. It functions in the pathway carbohydrate degradation; glycolysis; pyruvate from D-glyceraldehyde 3-phosphate: step 3/5. Its function is as follows. Catalyzes the interconversion of 2-phosphoglycerate and 3-phosphoglycerate. The protein is 2,3-bisphosphoglycerate-dependent phosphoglycerate mutase of Neisseria meningitidis serogroup B (strain ATCC BAA-335 / MC58).